Here is a 501-residue protein sequence, read N- to C-terminus: Aspartyl/glutamyl-tRNA(Asn/Gln) amidotransferase subunit B (501 aa).

Belongs to the GatB/GatE family. GatB subfamily. In terms of assembly, heterotrimer of A, B and C subunits.

The catalysed reaction is L-glutamyl-tRNA(Gln) + L-glutamine + ATP + H2O = L-glutaminyl-tRNA(Gln) + L-glutamate + ADP + phosphate + H(+). It carries out the reaction L-aspartyl-tRNA(Asn) + L-glutamine + ATP + H2O = L-asparaginyl-tRNA(Asn) + L-glutamate + ADP + phosphate + 2 H(+). In terms of biological role, allows the formation of correctly charged Asn-tRNA(Asn) or Gln-tRNA(Gln) through the transamidation of misacylated Asp-tRNA(Asn) or Glu-tRNA(Gln) in organisms which lack either or both of asparaginyl-tRNA or glutaminyl-tRNA synthetases. The reaction takes place in the presence of glutamine and ATP through an activated phospho-Asp-tRNA(Asn) or phospho-Glu-tRNA(Gln). In Mycobacterium sp. (strain KMS), this protein is Aspartyl/glutamyl-tRNA(Asn/Gln) amidotransferase subunit B.